A 76-amino-acid chain; its full sequence is Protein RALF-like 30 (76 aa).

The first 22 residues, 1–22, serve as a signal peptide directing secretion; that stretch reads MKAWVICLMVISIFMMIEPTLA. Cystine bridges form between Cys-37/Cys-46 and Cys-66/Cys-72.

Belongs to the plant rapid alkalinization factor (RALF) family.

It is found in the secreted. Cell signaling peptide that may regulate plant stress, growth, and development. Mediates a rapid alkalinization of extracellular space by mediating a transient increase in the cytoplasmic Ca(2+) concentration leading to a calcium-dependent signaling events through a cell surface receptor and a concomitant activation of some intracellular mitogen-activated protein kinases. This chain is Protein RALF-like 30 (RALFL30), found in Arabidopsis thaliana (Mouse-ear cress).